The chain runs to 229 residues: Somatolactin (229 aa).

The signal sequence occupies residues 1–24; that stretch reads MHLVSVIQRGVWAVLLWPNLLASS. 3 disulfide bridges follow: Cys29-Cys39, Cys87-Cys203, and Cys220-Cys228. Residues Asn143 and Asn175 are each glycosylated (N-linked (GlcNAc...) asparagine).

Belongs to the somatotropin/prolactin family.

The protein resides in the secreted. The chain is Somatolactin from Cyclopterus lumpus (Lumpsucker).